A 900-amino-acid chain; its full sequence is Alpha-actinin-3 (900 aa).

Methionine 1 carries the post-translational modification N-acetylmethionine. Positions 1-26 are disordered; the sequence is MMMVMQPEGLGAGEGPFSGGGGGEYM. Positions 1 to 260 are actin-binding; that stretch reads MMMVMQPEGL…IMTYVSCFYH (260 aa). The span at 10–24 shows a compositional bias: gly residues; that stretch reads LGAGEGPFSGGGGGE. Calponin-homology (CH) domains lie at 44–148 and 157–263; these read KQQR…LRFA and TSAK…HAFA. Spectrin repeat units lie at residues 287–397, 407–512, 522–633, and 643–746; these read KLME…WLLS, HLAE…ALER, QLQL…TLQE, and RLRR…EVEN. EF-hand domains are found at residues 759–794 and 795–830; these read EQLN…MGYD and LGEV…ETAE. Aspartate 772, asparagine 776, methionine 778, aspartate 783, aspartate 808, and asparagine 810 together coordinate Ca(2+).

Belongs to the alpha-actinin family. As to quaternary structure, homodimer; antiparallel. Also forms heterodimers with ACTN2. Interacts with MYOZ1. In terms of tissue distribution, expression restricted to skeletal muscle fast (type 2) fibers (at protein level).

Functionally, F-actin cross-linking protein which is thought to anchor actin to a variety of intracellular structures. This is a bundling protein. This Mus musculus (Mouse) protein is Alpha-actinin-3 (Actn3).